Consider the following 2552-residue polypeptide: Protein TIC 214 (2552 aa).

Transmembrane regions (helical) follow at residues 15–35 (LIFGIFYGILITFSKLTSYLF), 54–74 (LSYGFTVGHLLGYLLIYYLPF), 78–98 (LSNFYLKIILALGLMLYQFFW), 119–136 (TLAFVYGLSYRLLNYTFF), 154–174 (FKILFLYTTFFVWMIGHLICI), and 243–263 (ILATILFIVALYLLGKSPIPF). The segment at 304-325 (EEQKKDEKSADEEKKRAVEEEN) is disordered. Basic and acidic residues predominate over residues 305-322 (EQKKDEKSADEEKKRAVE). Transmembrane regions (helical) follow at residues 362-382 (TLYTFFSDCFFESFSFYAFLF), 423-443 (PFLVVVKPFYLYFFNFFSVYI), and 452-472 (FLFNHNFVFSAIFRGFSHFFF). The tract at residues 2045-2077 (MKAEEQKKIDEEYEEKKEKRKKEQEEQGKAFDE) is disordered. Residues 2416–2511 (RRRRQLRIVN…IKKKLMRLRF (96 aa)) adopt a coiled-coil conformation.

This sequence belongs to the TIC214 family. Part of the Tic complex.

It localises to the plastid. Its subcellular location is the chloroplast inner membrane. Involved in protein precursor import into chloroplasts. May be part of an intermediate translocation complex acting as a protein-conducting channel at the inner envelope. This is Protein TIC 214 from Pelargonium hortorum (Common geranium).